An 854-amino-acid chain; its full sequence is Selenocysteine insertion sequence-binding protein 2 (854 aa).

Disordered stretches follow at residues 332–351 (ADPK…DPSY), 356–394 (HIIH…KYEV), 417–445 (ERRD…KKSQ), and 488–619 (ECAS…PNHT). 2 stretches are compositionally biased toward polar residues: residues 338–350 (SIPS…SDPS) and 361–372 (TQKSKASQGSDL). The Nuclear localization signal signature appears at 380-387 (KNKKKKEK). Residues 426 to 445 (KFQSKQQPQDNFKNNVKKSQ) show a composition bias toward polar residues. Residues 536–547 (ILKERQERKQRL) are compositionally biased toward basic and acidic residues. Residues 548 to 559 (QENAVSPAFTSD) are compositionally biased toward polar residues. The span at 560 to 572 (DTQDGESGGDDQF) shows a compositional bias: acidic residues. A compositionally biased stretch (basic and acidic residues) spans 593–611 (VEDKSEEPPGTELQRDTEA). The segment at 673–694 (LVLGLREVLKHLKLKKLKCVII) is RNA-binding. Residues 787–812 (EPRPQAPPSLPTQGPSCPAEDGPPAL) form a disordered region.

As to expression, expressed at high levels in testis.

The protein localises to the nucleus. It is found in the mitochondrion. In terms of biological role, mRNA-binding protein that binds to the SECIS (selenocysteine insertion sequence) element present in the 3'-UTR of mRNAs encoding selenoproteins and facilitates the incorporation of the rare amino acid selenocysteine. Insertion of selenocysteine at UGA codons is mediated by SECISBP2 and EEFSEC: SECISBP2 (1) specifically binds the SECIS sequence once the 80S ribosome encounters an in-frame UGA codon and (2) contacts the RPS27A/eS31 of the 40S ribosome before ribosome stalling. (3) GTP-bound EEFSEC then delivers selenocysteinyl-tRNA(Sec) to the 80S ribosome and adopts a preaccommodated state conformation. (4) After GTP hydrolysis, EEFSEC dissociates from the assembly, selenocysteinyl-tRNA(Sec) accommodates, and peptide bond synthesis and selenoprotein elongation occur. The chain is Selenocysteine insertion sequence-binding protein 2 from Homo sapiens (Human).